The chain runs to 249 residues: Probable phosphatase Spea_1436 (249 aa).

9 residues coordinate Zn(2+): His-8, His-10, His-16, His-41, Glu-74, His-102, His-132, Asp-193, and His-195.

This sequence belongs to the PHP family. Zn(2+) is required as a cofactor.

The chain is Probable phosphatase Spea_1436 from Shewanella pealeana (strain ATCC 700345 / ANG-SQ1).